Reading from the N-terminus, the 352-residue chain is Mitochondrial ubiquitin ligase activator of NFKB 1 (352 aa).

Over 1–8 (MESGSRPS) the chain is Cytoplasmic. A helical transmembrane segment spans residues 9 to 29 (LGQVILLGTSSMVTAVLYSIY). At 30 to 238 (RQKAQVAQEL…LLHRQESSVR (209 aa)) the chain is on the mitochondrial intermembrane side. Lysine 52 is covalently cross-linked (Glycyl lysine isopeptide (Lys-Gly) (interchain with G-Cter in ubiquitin)). Residues 239-259 (LWKILVLVFGFATCATLFFIL) traverse the membrane as a helical segment. At 260–352 (RKQYLHRQER…ITRVIPLYNS (93 aa)) the chain is on the cytoplasmic side. Lysine 299 is covalently cross-linked (Glycyl lysine isopeptide (Lys-Gly) (interchain with G-Cter in ubiquitin)). Residues 302–340 (CVVCLSNFKSCVFLECGHVCSCRQCYLALPEPKRCPICR) form an RING-type zinc finger.

In terms of assembly, homooligomer. Interacts with MAP3K7/TAK1. Interacts with UBC9. Interacts with and sumoylates DNM1L. Interacts with MAVS. Interacts with TP53 (via N-terminus); the interaction leads to ubiquitination and proteasomal degradation of TP53. Ubiquitinated by PRKN during mitophagy, leading to its degradation and enhancement of mitophagy. Deubiquitinated by USP30. Expressed in cortical neurons (at protein level).

Its subcellular location is the mitochondrion outer membrane. The protein resides in the peroxisome. The catalysed reaction is S-ubiquitinyl-[E2 ubiquitin-conjugating enzyme]-L-cysteine + [acceptor protein]-L-lysine = [E2 ubiquitin-conjugating enzyme]-L-cysteine + N(6)-ubiquitinyl-[acceptor protein]-L-lysine.. It functions in the pathway protein modification; protein ubiquitination. Its pathway is protein modification; protein sumoylation. Exhibits weak E3 ubiquitin-protein ligase activity. E3 ubiquitin ligases accept ubiquitin from an E2 ubiquitin-conjugating enzyme in the form of a thioester and then directly transfer the ubiquitin to targeted substrates. Can ubiquitinate AKT1 preferentially at 'Lys-284' involving 'Lys-48'-linked polyubiquitination and seems to be involved in regulation of Akt signaling by targeting phosphorylated Akt to proteasomal degradation. Mediates polyubiquitination of cytoplasmic TP53 at 'Lys-27' which targets TP53 for proteasomal degradation, thus reducing TP53 levels in the cytoplasm and mitochondrion. Proposed to preferentially act as a SUMO E3 ligase at physiological concentrations. Plays a role in the control of mitochondrial morphology by promoting mitochondrial fragmentation, and influences mitochondrial localization. Likely to promote mitochondrial fission through negatively regulating the mitochondrial fusion proteins MFN1 and MFN2, acting in a pathway that is parallel to the PRKN/PINK1 regulatory pathway. May also be involved in the sumoylation of the membrane fission protein DNM1L. Inhibits cell growth. When overexpressed, activates JNK through MAP3K7/TAK1 and induces caspase-dependent apoptosis. Involved in the modulation of innate immune defense against viruses by inhibiting RIGI-dependent antiviral response. Can mediate RIGI sumoylation and disrupt its polyubiquitination. In Mus musculus (Mouse), this protein is Mitochondrial ubiquitin ligase activator of NFKB 1 (Mul1).